Consider the following 125-residue polypeptide: Large ribosomal subunit protein uL22 (125 aa).

The protein belongs to the universal ribosomal protein uL22 family. Part of the 50S ribosomal subunit.

Functionally, this protein binds specifically to 23S rRNA; its binding is stimulated by other ribosomal proteins, e.g. L4, L17, and L20. It is important during the early stages of 50S assembly. It makes multiple contacts with different domains of the 23S rRNA in the assembled 50S subunit and ribosome. The globular domain of the protein is located near the polypeptide exit tunnel on the outside of the subunit, while an extended beta-hairpin is found that lines the wall of the exit tunnel in the center of the 70S ribosome. The sequence is that of Large ribosomal subunit protein uL22 from Erythrobacter litoralis (strain HTCC2594).